The primary structure comprises 399 residues: MRLTQMPSEFQKALPVLEKIKEAGFEAYFVGGSVRDALLHSPIHDVDIATSSYPEETKQIFPRTADIGIEHGTVLVLDGDEEYEVTTFRTEDVYVDYRRPSAVSFVRSLEEDLKRRDFTVNAFALDETGEIVDLFHGLEDLEKQVLRAVGVASERFNEDALRIMRGFRFQASLGFALEPETFKAMKTLTPLLEKISVERTFVEFDKLLLAPFWRRGLASMIESQAYDYLPDMASSQDKLNRLFDLETDFTFESSEQAWAALLWALEIENAQSFLKSWKTSRQFAKQVQDLLIILALRENGELSKRDCYRFDIDLLLQAENLRQAQGKEVNPQAITEKYQSLTIHDKKEIQINGGILIKEYGYQPGPDLGEILTEIEFAIVDGELENNREAIHAYLREKK.

Positions 32 and 35 each coordinate ATP. Positions 32 and 35 each coordinate CTP. The Mg(2+) site is built by Asp-45 and Asp-47. Residues Arg-116, Asp-159, Arg-162, Arg-165, and Arg-168 each coordinate ATP. Residues Arg-116, Asp-159, Arg-162, Arg-165, and Arg-168 each coordinate CTP.

The protein belongs to the tRNA nucleotidyltransferase/poly(A) polymerase family. Bacterial CCA-adding enzyme type 3 subfamily. Homodimer. Mg(2+) serves as cofactor.

The enzyme catalyses a tRNA precursor + 2 CTP + ATP = a tRNA with a 3' CCA end + 3 diphosphate. It carries out the reaction a tRNA with a 3' CCA end + 2 CTP + ATP = a tRNA with a 3' CCACCA end + 3 diphosphate. Functionally, catalyzes the addition and repair of the essential 3'-terminal CCA sequence in tRNAs without using a nucleic acid template. Adds these three nucleotides in the order of C, C, and A to the tRNA nucleotide-73, using CTP and ATP as substrates and producing inorganic pyrophosphate. tRNA 3'-terminal CCA addition is required both for tRNA processing and repair. Also involved in tRNA surveillance by mediating tandem CCA addition to generate a CCACCA at the 3' terminus of unstable tRNAs. While stable tRNAs receive only 3'-terminal CCA, unstable tRNAs are marked with CCACCA and rapidly degraded. This chain is CCA-adding enzyme, found in Streptococcus pneumoniae serotype 4 (strain ATCC BAA-334 / TIGR4).